We begin with the raw amino-acid sequence, 388 residues long: Succinate--CoA ligase [ADP-forming] subunit beta (388 aa).

An ATP-grasp domain is found at 9–244; that stretch reads KQLFAEYGLP…PSQDDAREAH (236 aa). Residues K46, 53-55, E99, T102, and E107 contribute to the ATP site; that span reads GRG. Residues N199 and D213 each contribute to the Mg(2+) site. Residues N264 and 321–323 each bind substrate; that span reads GIV.

Belongs to the succinate/malate CoA ligase beta subunit family. In terms of assembly, heterotetramer of two alpha and two beta subunits. Requires Mg(2+) as cofactor.

It catalyses the reaction succinate + ATP + CoA = succinyl-CoA + ADP + phosphate. It carries out the reaction GTP + succinate + CoA = succinyl-CoA + GDP + phosphate. Its pathway is carbohydrate metabolism; tricarboxylic acid cycle; succinate from succinyl-CoA (ligase route): step 1/1. Succinyl-CoA synthetase functions in the citric acid cycle (TCA), coupling the hydrolysis of succinyl-CoA to the synthesis of either ATP or GTP and thus represents the only step of substrate-level phosphorylation in the TCA. The beta subunit provides nucleotide specificity of the enzyme and binds the substrate succinate, while the binding sites for coenzyme A and phosphate are found in the alpha subunit. This chain is Succinate--CoA ligase [ADP-forming] subunit beta, found in Pseudomonas entomophila (strain L48).